We begin with the raw amino-acid sequence, 434 residues long: CinA-like protein (434 aa).

Belongs to the CinA family.

This is CinA-like protein from Mycobacterium avium (strain 104).